Reading from the N-terminus, the 195-residue chain is MSGNIYMDIIASQVSQGNFGGKNGQFGYLAKDKSRREKKLTKETKFEAPKKKVEEKFECNVFIGSGTAKSTDSNGLSDPFVIIWSVDAEGQPDKSLFKSKVCKKTLTPNWDEKGTLKLKESYKSLIVELWDHDLLTANDFIGRARINVDAINIKKYSYTFKDTISVYDGEISTPSGTVYIEITNSSSTKSFSSCA.

A C2 domain is found at 38 to 161 (KKLTKETKFE…NIKKYSYTFK (124 aa)). Ca(2+)-binding residues include Asp-72, Asp-78, Asp-131, Asp-133, and Asp-139.

Ca(2+) is required as a cofactor.

The sequence is that of C2 domain-containing protein DDB_G0290753 from Dictyostelium discoideum (Social amoeba).